We begin with the raw amino-acid sequence, 92 residues long: Transcription factor S4 (92 aa).

The ZR-N stretch occupies residues 1 to 31 (MRFCPKCGSFLKVKGNKMVCSKCGYSDHDVE). 4 residues coordinate Zn(2+): cysteine 4, cysteine 7, cysteine 20, and cysteine 23. The segment at 32–56 (KVILKENVAHENDKTIIADGETIEG) is flexible linker. A ZR-C region spans residues 55-92 (EGRVAISLCPRCGSVRAILLNKKKRLYRCMTCNFVYNI). Zn(2+) is bound by residues cysteine 63 and cysteine 66. Residues lysine 76, lysine 77, and lysine 78 contribute to the active site. Cysteine 83 and cysteine 86 together coordinate Zn(2+).

It belongs to the archaeal RpoM/eukaryotic RPA12/RPB9/RPC11 RNA polymerase family. As to quaternary structure, interacts with RNA polymerase. The cofactor is Zn(2+).

In terms of biological role, a potent inhibitor of RNA polymerase (RNAP) probably involved in viral defense. Destabilizes the transcription pre-initiation complex of TBP, TFB, DNA and RNAP, inhibits abortive transcription initiation, productive initiation and transcription elongation. Increases the RNAP KM for NTPs about 50-fold. Overexpression of TFS1-tip4 (TFS1 with the active tip of this protein, phenocopies this protein) in S.acidocaldarius MW001 leads to severe growth inhibition. When bound to RNAP induces conformational changes that widen the DNA-binding channel, probably destabilizing the interaction of DNA with RNAP. This chain is Transcription factor S4, found in Saccharolobus solfataricus (strain ATCC 35092 / DSM 1617 / JCM 11322 / P2) (Sulfolobus solfataricus).